The sequence spans 372 residues: Protein phosphatase Mn(2+)-dependent 1K (372 aa).

Residues 1 to 29 (MSTAALITLVRSGGNQVRRRVLLSSRLLQ) constitute a mitochondrion transit peptide. The interval 34 to 55 (VTPTCHSSTSEPRCSRFDPDGS) is disordered. Positions 46 to 61 (RCSRFDPDGSGSPATW) are critical for association with the BCKDH complex. The PPM-type phosphatase domain maps to 94–346 (NVGCASQIGK…DNSTAVVVPF (253 aa)). Mn(2+)-binding residues include D127 and G128. Position 248 is a phosphoserine (S248). Positions 298 and 337 each coordinate Mn(2+).

This sequence belongs to the PP2C family. As to quaternary structure, monomer. Interacts with E1 and E2 components of the branched-chain alpha-ketoacid dehydrogenase (BCKDH) complex; this interaction requires colocalization in mitochondria. Interacts with BCKDHA but not with BCKDHB of the E1 component. Interacts with the 24-meric E2 core composed of DBT monomers with a 24:1 stoichiometry; the N-terminal region (residues 49-61) of PPM1K and C-terminal linker of the lipoyl domain of DBT (residues 145-160) are critical for this interaction, whereas the lipoyl prosthetic group is dispensable. Competes with BCKDK for binding to the E2 core; this interaction is modulated by branched-chain alpha-keto acids. At steady state, BCKDH holoenzyme preferentially binds BCKDK and BCKDHA is phosphorylated. In response to high levels of branched-chain alpha-keto acids, the inhibitory BCKDK is replaced by activating PPM1K leading to BCKDHA dephosphorylation and BCAA degradation. Mn(2+) is required as a cofactor.

The protein resides in the mitochondrion matrix. It carries out the reaction O-phospho-L-seryl-[3-methyl-2-oxobutanoate dehydrogenase] + H2O = L-seryl-[3-methyl-2-oxobutanoate dehydrogenase] + phosphate. The catalysed reaction is O-phospho-L-seryl-[protein] + H2O = L-seryl-[protein] + phosphate. It functions in the pathway protein modification. With respect to regulation, up-regulated upon interaction with the 24-meric DBT/E2 core of the BCKDH complex. Inhibited by Mg(2+) and Ca(2+) ions likely by competing with Mn(2+) ions for binding to the same metal-binding sites. Serine/threonine-protein phosphatase component of macronutrients metabolism. Forms a functional kinase and phosphatase pair with BCKDK, serving as a metabolic regulatory node that coordinates branched-chain amino acids (BCAAs) with glucose and lipid metabolism via two distinct phosphoprotein targets: mitochondrial BCKDHA subunit of the branched-chain alpha-ketoacid dehydrogenase (BCKDH) complex and cytosolic ACLY, a lipogenic enzyme of Krebs cycle. At high levels of branched-chain ketoacids, dephosphorylates and activates mitochondrial BCKDH complex, a multisubunit complex consisting of three multimeric components each involved in different steps of BCAA catabolism: E1 composed of BCKDHA and BCKDHB, E2 core composed of DBT monomers, and E3 composed of DLD monomers. Tightly associates with the E2 component of BCKDH complex and dephosphorylates BCKDHA on Ser-337. Regulates the reversible phosphorylation of ACLY in response to changes in cellular carbohydrate abundance such as occurs during fasting to feeding metabolic transition. At fasting state, appears to dephosphorylate ACLY on Ser-455 and inactivate it. Refeeding stimulates MLXIPL/ChREBP transcription factor, leading to increased BCKDK to PPM1K expression ratio, phosphorylation and activation of ACLY that ultimately results in the generation of malonyl-CoA and oxaloacetate immediate substrates of de novo lipogenesis and gluconeogenesis, respectively. Recognizes phosphosites having SxS or RxxS motifs and strictly depends on Mn(2+) ions for the phosphatase activity. Regulates Ca(2+)-induced opening of mitochondrial transition pore and apoptotic cell death. The polypeptide is Protein phosphatase Mn(2+)-dependent 1K (Homo sapiens (Human)).